A 292-amino-acid chain; its full sequence is Geranyl diphosphate 2-C-methyltransferase (292 aa).

This sequence belongs to the geranyl diphosphate 2-C-methyltransferase family. It depends on Mg(2+) as a cofactor.

The enzyme catalyses (2E)-geranyl diphosphate + S-adenosyl-L-methionine = (E)-2-methylgeranyl diphosphate + S-adenosyl-L-homocysteine + H(+). Functionally, catalyzes the SAM-dependent methylation of geranyl diphosphate (GPP) to yield (E)-2-methylgeranyl diphosphate (2-MeGPP). In Streptomyces coelicolor (strain ATCC BAA-471 / A3(2) / M145), this protein is Geranyl diphosphate 2-C-methyltransferase.